We begin with the raw amino-acid sequence, 313 residues long: Olfactory receptor 56A5 (313 aa).

At 1-33 (MTLPSNNSTSPVFEFFLICFPSFQSWQHWLSLP) the chain is on the extracellular side. Residues asparagine 6 and asparagine 7 are each glycosylated (N-linked (GlcNAc...) asparagine). A helical transmembrane segment spans residues 34-54 (LSLLFLLAMGANATLLITIYL). Residues 55–67 (EASLHQPLYYLLS) are Cytoplasmic-facing. Residues 68–88 (LLSLLDIVLCLTVIPKVLAIF) form a helical membrane-spanning segment. At 89-100 (WFDLRSISFPAC) the chain is on the extracellular side. An intrachain disulfide couples cysteine 100 to cysteine 182. The chain crosses the membrane as a helical span at residues 101 to 121 (FLQVFIMNSFLTMESCTFMIM). The Cytoplasmic segment spans residues 122-146 (AYDRYVAICKPLQYSSIITDQFVAR). The helical transmembrane segment at 147–167 (AAIFVVARNGLLTMPIPILSS) threads the bilayer. Over 168 to 203 (RLRYCAGHIIKNCICTNVSVSKLSCDDITLNQSYQF) the chain is Extracellular. N-linked (GlcNAc...) asparagine glycosylation is found at asparagine 184 and asparagine 198. The helical transmembrane segment at 204–224 (VIGWTLLGSDLILIVLSYFFI) threads the bilayer. Over 225–246 (LKTVLRIKGEGDMAKALGTCGS) the chain is Cytoplasmic. A helical transmembrane segment spans residues 247-267 (HFILILFFTTVLLVLVITNLA). Residues 268-276 (RKRIPPDVP) are Extracellular-facing. A helical membrane pass occupies residues 277–297 (ILLNILHHLIPPALNPIVYGV). Over 298–313 (RTKEIKQGIQNLLRRL) the chain is Cytoplasmic.

Belongs to the G-protein coupled receptor 1 family.

The protein localises to the cell membrane. Functionally, odorant receptor. The polypeptide is Olfactory receptor 56A5 (OR56A5) (Homo sapiens (Human)).